Here is a 264-residue protein sequence, read N- to C-terminus: Thymidylate synthase (264 aa).

R21 serves as a coordination point for dUMP. (6R)-5,10-methylene-5,6,7,8-tetrahydrofolate is bound at residue H51. 126 to 127 serves as a coordination point for dUMP; it reads RR. C146 (nucleophile) is an active-site residue. DUMP contacts are provided by residues 166 to 169, N177, and 207 to 209; these read RSCD and HLY. D169 serves as a coordination point for (6R)-5,10-methylene-5,6,7,8-tetrahydrofolate. A263 serves as a coordination point for (6R)-5,10-methylene-5,6,7,8-tetrahydrofolate.

The protein belongs to the thymidylate synthase family. Bacterial-type ThyA subfamily. In terms of assembly, homodimer.

The protein resides in the cytoplasm. It catalyses the reaction dUMP + (6R)-5,10-methylene-5,6,7,8-tetrahydrofolate = 7,8-dihydrofolate + dTMP. The protein operates within pyrimidine metabolism; dTTP biosynthesis. Its function is as follows. Catalyzes the reductive methylation of 2'-deoxyuridine-5'-monophosphate (dUMP) to 2'-deoxythymidine-5'-monophosphate (dTMP) while utilizing 5,10-methylenetetrahydrofolate (mTHF) as the methyl donor and reductant in the reaction, yielding dihydrofolate (DHF) as a by-product. This enzymatic reaction provides an intracellular de novo source of dTMP, an essential precursor for DNA biosynthesis. The protein is Thymidylate synthase of Salmonella arizonae (strain ATCC BAA-731 / CDC346-86 / RSK2980).